A 116-amino-acid polypeptide reads, in one-letter code: Classical arabinogalactan protein 25 (116 aa).

The N-terminal stretch at 1-28 (MAFSFLNKLLIIFIFIFISLSSSSPTIS) is a signal peptide. Positions 40 to 95 (LLPSPGDALPSDDGSGTIPSSPSPPDPDTNDGSYPDPLAFSPFASPPVSSPSPPPS) are disordered. Composition is skewed to low complexity over residues 50–59 (SDDGSGTIPS) and 69–82 (NDGS…FSPF). Pro residues predominate over residues 83–95 (ASPPVSSPSPPPS). Residue serine 89 is the site of GPI-anchor amidated serine attachment. Residues 90–116 (PSPPPSLPSAGVLLISLIISSASFLAL) constitute a propeptide, removed in mature form.

This sequence belongs to the classical AGP family. O-glycosylated on the hydroxyproline residues.

Its subcellular location is the cell membrane. Proteoglycan that seems to be implicated in diverse developmental roles such as differentiation, cell-cell recognition, embryogenesis and programmed cell death. This Arabidopsis thaliana (Mouse-ear cress) protein is Classical arabinogalactan protein 25 (AGP25).